A 370-amino-acid chain; its full sequence is MKNEVAISTSHLDAGATGTGLTYKDAGVDIDSGNALVQAIKPLAASTKRPGADASLGGFGAIFDLAAAGYSDPLLITATDGVGTKLKIALDSGIHDSVGIDLVAMCVNDLVVQGGEPLLFLDYFATSRLQVPVASAVVKGIAEGCLQAGCALVGGETAEMPGMYGNNDYDLAGFAVGAVERSQLLTDDRIGLGDVLLGLASSGVHSNGFSLVRRIVERSGLAWDAPAPFAPETTLARALLTPTRIYVKSCLALHRAGLVHGFAHITGGGFWENIPRVLPQGACAHLDGLSWPFPPVFRWLMDQGGVSAHEMARTFNCGIGMVVAVPADKAEAAIALLGEHGETVHRLGTIAARGEGEAVIIDHLDEAFAR.

This sequence belongs to the AIR synthase family.

It localises to the cytoplasm. It carries out the reaction 2-formamido-N(1)-(5-O-phospho-beta-D-ribosyl)acetamidine + ATP = 5-amino-1-(5-phospho-beta-D-ribosyl)imidazole + ADP + phosphate + H(+). Its pathway is purine metabolism; IMP biosynthesis via de novo pathway; 5-amino-1-(5-phospho-D-ribosyl)imidazole from N(2)-formyl-N(1)-(5-phospho-D-ribosyl)glycinamide: step 2/2. In Rhodospirillum rubrum (strain ATCC 11170 / ATH 1.1.1 / DSM 467 / LMG 4362 / NCIMB 8255 / S1), this protein is Phosphoribosylformylglycinamidine cyclo-ligase.